The following is a 73-amino-acid chain: Antitoxin VapB20 (73 aa).

In terms of biological role, antitoxin component of a type II toxin-antitoxin (TA) system. Upon expression in E.coli neutralizes the toxic effect of cognate toxin VapC20. The sequence is that of Antitoxin VapB20 (vapB20) from Mycobacterium tuberculosis (strain ATCC 25618 / H37Rv).